A 174-amino-acid chain; its full sequence is ATP-dependent protease subunit HslV (174 aa).

Thr2 is an active-site residue. Residues Gly157, Cys160, and Thr163 each contribute to the Na(+) site.

Belongs to the peptidase T1B family. HslV subfamily. In terms of assembly, a double ring-shaped homohexamer of HslV is capped on each side by a ring-shaped HslU homohexamer. The assembly of the HslU/HslV complex is dependent on binding of ATP.

It is found in the cytoplasm. The catalysed reaction is ATP-dependent cleavage of peptide bonds with broad specificity.. Its activity is regulated as follows. Allosterically activated by HslU binding. Protease subunit of a proteasome-like degradation complex believed to be a general protein degrading machinery. The protein is ATP-dependent protease subunit HslV of Shewanella denitrificans (strain OS217 / ATCC BAA-1090 / DSM 15013).